Reading from the N-terminus, the 187-residue chain is Protein SCM4 (187 aa).

The next 3 membrane-spanning stretches (helical) occupy residues 11-31 (IAVSSLGLYAGILTSSTVISI), 45-65 (VLCTLGCWSTVLGGLATGAFG), and 80-100 (LLCGLGVAPLSAAYLYLVSLF). The segment covering 114–134 (DLEKQKDEKLPQHHPEVKDGE) has biased composition (basic and acidic residues). The disordered stretch occupies residues 114–135 (DLEKQKDEKLPQHHPEVKDGEA). A helical membrane pass occupies residues 162–182 (MSLHMSIVTGITIFTFGKCIL).

This sequence belongs to the ATG33 family.

It localises to the membrane. This Saccharomyces cerevisiae (strain ATCC 204508 / S288c) (Baker's yeast) protein is Protein SCM4 (SCM4).